The chain runs to 81 residues: ATP synthase subunit c, chloroplastic (81 aa).

A run of 2 helical transmembrane segments spans residues 3–23 and 57–77; these read PLIAAASVIAAGLAVGLASIG and LAFMEALTIYGLVVALALLFA.

It belongs to the ATPase C chain family. F-type ATPases have 2 components, F(1) - the catalytic core - and F(0) - the membrane proton channel. F(1) has five subunits: alpha(3), beta(3), gamma(1), delta(1), epsilon(1). F(0) has four main subunits: a(1), b(1), b'(1) and c(10-14). The alpha and beta chains form an alternating ring which encloses part of the gamma chain. F(1) is attached to F(0) by a central stalk formed by the gamma and epsilon chains, while a peripheral stalk is formed by the delta, b and b' chains.

It is found in the plastid. The protein resides in the chloroplast thylakoid membrane. Functionally, f(1)F(0) ATP synthase produces ATP from ADP in the presence of a proton or sodium gradient. F-type ATPases consist of two structural domains, F(1) containing the extramembraneous catalytic core and F(0) containing the membrane proton channel, linked together by a central stalk and a peripheral stalk. During catalysis, ATP synthesis in the catalytic domain of F(1) is coupled via a rotary mechanism of the central stalk subunits to proton translocation. In terms of biological role, key component of the F(0) channel; it plays a direct role in translocation across the membrane. A homomeric c-ring of between 10-14 subunits forms the central stalk rotor element with the F(1) delta and epsilon subunits. In Agrostis stolonifera (Creeping bentgrass), this protein is ATP synthase subunit c, chloroplastic.